We begin with the raw amino-acid sequence, 283 residues long: Bifunctional protein FolD (283 aa).

NADP(+) is bound by residues 165–167 (GRG), Thr192, and Val233.

Belongs to the tetrahydrofolate dehydrogenase/cyclohydrolase family. As to quaternary structure, homodimer.

It carries out the reaction (6R)-5,10-methylene-5,6,7,8-tetrahydrofolate + NADP(+) = (6R)-5,10-methenyltetrahydrofolate + NADPH. The enzyme catalyses (6R)-5,10-methenyltetrahydrofolate + H2O = (6R)-10-formyltetrahydrofolate + H(+). The protein operates within one-carbon metabolism; tetrahydrofolate interconversion. In terms of biological role, catalyzes the oxidation of 5,10-methylenetetrahydrofolate to 5,10-methenyltetrahydrofolate and then the hydrolysis of 5,10-methenyltetrahydrofolate to 10-formyltetrahydrofolate. In Thermobifida fusca (strain YX), this protein is Bifunctional protein FolD.